A 668-amino-acid chain; its full sequence is Probable syringafactin export ATP-binding/permease protein SyfD (668 aa).

Residues 22–260 (LRLQQVSRSF…APEAQPATPP (239 aa)) form the ABC transporter domain. 58 to 65 (GASGSGKS) contacts ATP. The disordered stretch occupies residues 242–263 (RRTAQTTQPAPEAQPATPPGPA). The span at 245–256 (AQTTQPAPEAQP) shows a compositional bias: low complexity. 5 consecutive transmembrane segments (helical) span residues 267 to 287 (LLAS…ALIS), 293 to 313 (LLTM…SAIG), 541 to 561 (LTLL…IGVM), 602 to 622 (MGGV…TLFV), and 631 to 651 (LASV…FGFV).

Belongs to the ABC transporter superfamily. Macrolide exporter (TC 3.A.1.122) family. As to quaternary structure, probably part of a tripartite efflux system, which is composed of an inner membrane transporter, a periplasmic membrane fusion protein, and an outer membrane component.

Its subcellular location is the cell inner membrane. Probably involved in the export of syringafactins. The chain is Probable syringafactin export ATP-binding/permease protein SyfD from Pseudomonas syringae pv. tomato (strain ATCC BAA-871 / DC3000).